The chain runs to 302 residues: Recombination-associated protein RdgC (302 aa).

It belongs to the RdgC family.

The protein localises to the cytoplasm. It is found in the nucleoid. Functionally, may be involved in recombination. The sequence is that of Recombination-associated protein RdgC from Psychromonas ingrahamii (strain DSM 17664 / CCUG 51855 / 37).